The chain runs to 270 residues: Fibroblast growth factor 5 (270 aa).

Positions 1-20 (MSLSLLLLLFLSHLILSAWA) are cleaved as a signal peptide. A disordered region spans residues 26 to 84 (LAPKGQPGPAATGRNPGGAGGSSTSGGTTSSSSSSVSSAPGASPGIRGSGSEQGSFQWS). Over residues 40–49 (NPGGAGGSST) the composition is skewed to gly residues. The span at 50–70 (SGGTTSSSSSSVSSAPGASPG) shows a compositional bias: low complexity. Over residues 75 to 84 (GSEQGSFQWS) the composition is skewed to polar residues. Asparagine 112 carries an N-linked (GlcNAc...) asparagine glycan. Positions 237 to 257 (EKKKPPSHVKPKVPLSAPRKS) are disordered.

This sequence belongs to the heparin-binding growth factors family. As to quaternary structure, interacts with FGFR1 and FGFR2. Affinity between fibroblast growth factors (FGFs) and their receptors is increased by heparan sulfate glycosaminoglycans that function as coreceptors.

The protein resides in the secreted. Its function is as follows. Plays an important role in the regulation of cell proliferation and cell differentiation. Required for normal regulation of the hair growth cycle. Functions as an inhibitor of hair elongation by promoting progression from anagen, the growth phase of the hair follicle, into catagen the apoptosis-induced regression phase. The polypeptide is Fibroblast growth factor 5 (FGF5) (Canis lupus familiaris (Dog)).